The primary structure comprises 560 residues: Dihydroxy-acid dehydratase (560 aa).

[2Fe-2S] cluster is bound at residue C50. D82 contributes to the Mg(2+) binding site. Position 123 (C123) interacts with [2Fe-2S] cluster. Positions 124 and 125 each coordinate Mg(2+). K125 is subject to N6-carboxylysine. C195 lines the [2Fe-2S] cluster pocket. Mg(2+) is bound at residue E447. S473 acts as the Proton acceptor in catalysis.

This sequence belongs to the IlvD/Edd family. Homodimer. The cofactor is [2Fe-2S] cluster. Mg(2+) serves as cofactor.

The enzyme catalyses (2R)-2,3-dihydroxy-3-methylbutanoate = 3-methyl-2-oxobutanoate + H2O. The catalysed reaction is (2R,3R)-2,3-dihydroxy-3-methylpentanoate = (S)-3-methyl-2-oxopentanoate + H2O. It participates in amino-acid biosynthesis; L-isoleucine biosynthesis; L-isoleucine from 2-oxobutanoate: step 3/4. The protein operates within amino-acid biosynthesis; L-valine biosynthesis; L-valine from pyruvate: step 3/4. Its function is as follows. Functions in the biosynthesis of branched-chain amino acids. Catalyzes the dehydration of (2R,3R)-2,3-dihydroxy-3-methylpentanoate (2,3-dihydroxy-3-methylvalerate) into 2-oxo-3-methylpentanoate (2-oxo-3-methylvalerate) and of (2R)-2,3-dihydroxy-3-methylbutanoate (2,3-dihydroxyisovalerate) into 2-oxo-3-methylbutanoate (2-oxoisovalerate), the penultimate precursor to L-isoleucine and L-valine, respectively. This is Dihydroxy-acid dehydratase from Thermosynechococcus vestitus (strain NIES-2133 / IAM M-273 / BP-1).